Here is a 173-residue protein sequence, read N- to C-terminus: Streptothricin acetyltransferase A (173 aa).

One can recognise an N-acetyltransferase domain in the interval 21–173 (VVFGRMIPAF…EIAIFWYYKF (153 aa)).

This sequence belongs to the acetyltransferase family. GNAT subfamily. In terms of assembly, homodimer.

It catalyses the reaction streptothricin D + acetyl-CoA = N(beta)-acetylstreptothricin D + CoA + H(+). It carries out the reaction streptothricin F + acetyl-CoA = N(beta)-acetylstreptothricin F + CoA + H(+). In terms of biological role, involved in resistance to streptothricin, a broad-spectrum antibiotic produced by streptomycetes. Detoxifies streptothricin via acetylation of the beta amino group of the first beta-lysyl moiety of streptothricin. The chain is Streptothricin acetyltransferase A from Bacillus subtilis (strain 168).